Reading from the N-terminus, the 443-residue chain is MLLDAGAQYPAIGVTTFGSSRHHSAGDVTDREVALGINPFADGMGAFKLNPSSHDLASGQTAFTSQAPGYAAAALGHHHHPGHVSSYSSAAFNSTRDFLFRNRGFGEAASAQHSLFASAAGGFPGPHGPHADTTGHLIFPGLHEQAASHASPNVVNGQMRLGFSGDMYGRPDQYGQVTSPRSEHYASSQLHGYGPMNMNMAAHHGAGAFFRYMRQPIKQELICKWIEPEQLANPKKSCNKTFSTMHELVTHVTVEHVGGPEQSNHICVWEECPREGKPFKAKYKLINHIRVHTGEKPFPCPFPGCGKVFARSENLKIHKRTHTGEKPFKCEFEGCDRRFANSSDRKKHMHVHTSDKPYLCKMCDKSYTHPSSLRKHMKVHEASSQGSQPSPAASSGYESSTPPTIVSPSAENQSTSSLSPSSSAVHHTSNHSTLSSNFNEWYV.

Residues 221–256 (LICKWIEPEQLANPKKSCNKTFSTMHELVTHVTVEH) form a C2H2-type 1; atypical zinc finger. Residues 265–292 (HICVWEECPREGKPFKAKYKLINHIRVH) form a C2H2-type 2; atypical zinc finger. 3 C2H2-type zinc fingers span residues 298–322 (FPCP…KRTH), 328–352 (FKCE…MHVH), and 358–380 (YLCK…MKVH). The tract at residues 371–433 (SSLRKHMKVH…AVHHTSNHST (63 aa)) is disordered. Positions 383 to 396 (SSQGSQPSPAASSG) are enriched in low complexity. Positions 397 to 413 (YESSTPPTIVSPSAENQ) are enriched in polar residues. Residues 408-443 (PSAENQSTSSLSPSSSAVHHTSNHSTLSSNFNEWYV) are negatively regulates transcriptional activity. A compositionally biased stretch (low complexity) spans 414–433 (STSSLSPSSSAVHHTSNHST).

It belongs to the GLI C2H2-type zinc-finger protein family. During early gastrula stages, widely expressed in the dorsal ectoderm. At mid-gastrula, expressed throughout the presumptive neural plate and at late gastrula, expression gradually diminishes in the dorsal midline and increases in the anterior folds. By early neurula stage, expression becomes restricted to the lateral edges of the neural plate, corresponding to the presumptive dorsal neural plate and neural crest, and in flanking ectoderm. In early tailbud stages (stages 22-23), expressed in the dorsal forebrain, midbrain and hindbrain. Subsequently expressed in the telencephalon and at the diencephalon/mesencephalon boundary. In the spinal cord, expression is restricted to the dorsal most region including the roof plate. Also expressed in the somites but not in eye vesicles. At larval stages, expressed mainly in the dorsal neural tube throughout its anteroposterior axis.

It localises to the nucleus. It is found in the cytoplasm. Transcriptional activator that induces expression of multiple genes including pax3, en2, snai2/slug, feb and a subset of wnt genes. Has multiple key roles in the regulation of neural induction and neurogenesis: acts as a neural competence factor, sensitizing the presumptive neuroectoderm to respond to subsequent neuralizing signals. Promotes both preplacodal cell fates and neural crest cell fates, two of the cell populations that arise from the neural plate border. Cooperates with pax3 in concert with wnt signaling to determine neural crest fate. Synergizes with the bmp-inhibitor noggin/nog and acts through the wnt pathway to induce expression of en2. May bind to the minimal GLI-consensus sequence 5'-TGGGTGGTC-3'. This is Zinc finger protein ZIC 1 (zic1) from Xenopus laevis (African clawed frog).